The sequence spans 313 residues: Aspartate carbamoyltransferase catalytic subunit (313 aa).

Carbamoyl phosphate-binding residues include Arg58 and Thr59. Lys86 contacts L-aspartate. Carbamoyl phosphate-binding residues include Arg108, His136, and Gln139. Positions 169 and 223 each coordinate L-aspartate. Carbamoyl phosphate contacts are provided by Gly264 and Pro265.

This sequence belongs to the aspartate/ornithine carbamoyltransferase superfamily. ATCase family. Heterododecamer (2C3:3R2) of six catalytic PyrB chains organized as two trimers (C3), and six regulatory PyrI chains organized as three dimers (R2).

The catalysed reaction is carbamoyl phosphate + L-aspartate = N-carbamoyl-L-aspartate + phosphate + H(+). It functions in the pathway pyrimidine metabolism; UMP biosynthesis via de novo pathway; (S)-dihydroorotate from bicarbonate: step 2/3. Catalyzes the condensation of carbamoyl phosphate and aspartate to form carbamoyl aspartate and inorganic phosphate, the committed step in the de novo pyrimidine nucleotide biosynthesis pathway. The sequence is that of Aspartate carbamoyltransferase catalytic subunit from Syntrophotalea carbinolica (strain DSM 2380 / NBRC 103641 / GraBd1) (Pelobacter carbinolicus).